Here is a 90-residue protein sequence, read N- to C-terminus: ATP synthase subunit c (90 aa).

Transmembrane regions (helical) follow at residues 4–24 (FVYS…GCGI) and 53–73 (IGLA…LILI).

Belongs to the ATPase C chain family. As to quaternary structure, F-type ATPases have 2 components, F(1) - the catalytic core - and F(0) - the membrane proton channel. F(1) has five subunits: alpha(3), beta(3), gamma(1), delta(1), epsilon(1). F(0) has three main subunits: a(1), b(2) and c(10-14). The alpha and beta chains form an alternating ring which encloses part of the gamma chain. F(1) is attached to F(0) by a central stalk formed by the gamma and epsilon chains, while a peripheral stalk is formed by the delta and b chains.

Its subcellular location is the cell inner membrane. In terms of biological role, f(1)F(0) ATP synthase produces ATP from ADP in the presence of a proton or sodium gradient. F-type ATPases consist of two structural domains, F(1) containing the extramembraneous catalytic core and F(0) containing the membrane proton channel, linked together by a central stalk and a peripheral stalk. During catalysis, ATP synthesis in the catalytic domain of F(1) is coupled via a rotary mechanism of the central stalk subunits to proton translocation. Its function is as follows. Key component of the F(0) channel; it plays a direct role in translocation across the membrane. A homomeric c-ring of between 10-14 subunits forms the central stalk rotor element with the F(1) delta and epsilon subunits. The polypeptide is ATP synthase subunit c (Syntrophobacter fumaroxidans (strain DSM 10017 / MPOB)).